Consider the following 393-residue polypeptide: DNA polymerase processivity factor (393 aa).

3 disordered regions span residues 25–50 (EMERGSRDHHRDHRDHREHRETREPP), 311–339 (ESRFERMGKQDDGKGDRSHKNDDGSALAS), and 355–393 (KNGTAGSSLFNEKEDSESDDSMHFDYSSNPNPKRQRCVV). Positions 31-41 (RDHHRDHRDHR) are enriched in basic residues. Positions 311-333 (ESRFERMGKQDDGKGDRSHKNDD) are enriched in basic and acidic residues.

It belongs to the herpesviridae polymerase accessory protein family.

In terms of biological role, accessory subunit of the DNA polymerase that acts to increase the processivity of polymerization. The protein is DNA polymerase processivity factor (U27) of Human herpesvirus 6A (strain Uganda-1102) (HHV-6 variant A).